Here is a 115-residue protein sequence, read N- to C-terminus: Autophagy-related protein 8i (115 aa).

Glycine 115 is lipidated: Phosphatidylethanolamine amidated glycine.

The protein belongs to the ATG8 family. Interacts with ATG4. Interacts with NBR1. In terms of processing, gly-115 forms then a thioester bond with the 'Cys-558' of ATG7 (E1-like activating enzyme) before being transferred to the 'Cys-258' of ATG3 (the specific E2 conjugating enzyme), in order to be finally amidated with phosphatidylethanolamine. This lipid modification anchors ATG8 to autophagosomes. In terms of tissue distribution, constitutively expressed.

It is found in the cytoplasmic vesicle. Its subcellular location is the autophagosome membrane. The protein localises to the vacuole membrane. It localises to the cytoplasm. The protein resides in the cytoskeleton. Its function is as follows. Ubiquitin-like modifier involved in autophagosomes formation. May mediate the delivery of the autophagosomes to the vacuole via the microtubule cytoskeleton. This chain is Autophagy-related protein 8i (ATG8I), found in Arabidopsis thaliana (Mouse-ear cress).